A 1128-amino-acid polypeptide reads, in one-letter code: Testis-expressed protein 2 (1128 aa).

3 disordered regions span residues 1–28 (MTSL…VQRS), 71–99 (AKED…GLSV), and 130–279 (PLAL…FFKV). Residues 130–186 (PLALSPGSSSSGPLASSPSVSSLSEQKTSSSSPLSSPSKSPVLSSSASSSALSSAKP) show a composition bias toward low complexity. The residue at position 195 (S195) is a Phosphoserine. Polar residues predominate over residues 248-274 (QFTQPRNTGGDSKTAPSSPLTSPSDTR). Residue T261 is modified to Phosphothreonine. A phosphoserine mark is found at S264, S265, S269, and S294. Positions 345–387 (KEEEGDSEGEGYGSDSNTSRSDHLKPTEDASKEVEPKGSQASS) are disordered. Positions 364–380 (RSDHLKPTEDASKEVEP) are enriched in basic and acidic residues. 2 consecutive transmembrane segments (helical) span residues 473-493 (TLGF…PYYM) and 495-515 (GLFL…WFFT). N593 carries N-linked (GlcNAc...) asparagine glycosylation. A compositionally biased stretch (basic and acidic residues) spans 645–671 (SKAQSDKEATEEKPPPEKELPSEDLKK). Disordered stretches follow at residues 645 to 688 (SKAQ…DPIL), 716 to 765 (RKPA…QKEL), 787 to 821 (QDNR…EEEQ), and 945 to 981 (ADSD…GYVG). 7 positions are modified to phosphoserine: S733, S739, S745, S749, S752, S799, and S816. Over residues 736–751 (SSPSGHLSHSRSSSKG) the composition is skewed to low complexity. A compositionally biased stretch (polar residues) spans 796 to 806 (PVQSAESSPTA). Residues 817–1102 (EEEEQEAWVN…MPNMDDVYIP (286 aa)) form the SMP-LTD domain. Residues 946–963 (DSDEESSSAGSSEEDDPP) are compositionally biased toward acidic residues.

Its subcellular location is the endoplasmic reticulum membrane. It is found in the nucleus membrane. In terms of biological role, during endoplasmic reticulum (ER) stress or when cellular ceramide levels increase, may induce contacts between the ER and medial-Golgi complex to facilitate non-vesicular transport of ceramides from the ER to the Golgi complex where they are converted to complex sphingolipids, preventing toxic ceramide accumulation. The chain is Testis-expressed protein 2 (Tex2) from Mus musculus (Mouse).